The following is a 311-amino-acid chain: tRNA-cytidine(32) 2-sulfurtransferase (311 aa).

The PP-loop motif signature appears at 47 to 52 (SGGKDS). C122, C125, and C213 together coordinate [4Fe-4S] cluster.

The protein belongs to the TtcA family. In terms of assembly, homodimer. Mg(2+) serves as cofactor. [4Fe-4S] cluster is required as a cofactor.

The protein localises to the cytoplasm. It catalyses the reaction cytidine(32) in tRNA + S-sulfanyl-L-cysteinyl-[cysteine desulfurase] + AH2 + ATP = 2-thiocytidine(32) in tRNA + L-cysteinyl-[cysteine desulfurase] + A + AMP + diphosphate + H(+). The protein operates within tRNA modification. Its function is as follows. Catalyzes the ATP-dependent 2-thiolation of cytidine in position 32 of tRNA, to form 2-thiocytidine (s(2)C32). The sulfur atoms are provided by the cysteine/cysteine desulfurase (IscS) system. This Escherichia coli (strain K12 / MC4100 / BW2952) protein is tRNA-cytidine(32) 2-sulfurtransferase.